A 257-amino-acid polypeptide reads, in one-letter code: Phosphonates import ATP-binding protein PhnC (257 aa).

Residues 7–251 (IQLKDVSKIY…VFTDIYNGGD (245 aa)) form the ABC transporter domain. Position 40–47 (40–47 (GLSGAGKS)) interacts with ATP.

It belongs to the ABC transporter superfamily. Phosphonates importer (TC 3.A.1.9.1) family. The complex is composed of two ATP-binding proteins (PhnC), two transmembrane proteins (PhnE) and a solute-binding protein (PhnD).

It is found in the cell membrane. It carries out the reaction phosphonate(out) + ATP + H2O = phosphonate(in) + ADP + phosphate + H(+). Functionally, part of the ABC transporter complex PhnCDE involved in phosphonates import. Responsible for energy coupling to the transport system. The polypeptide is Phosphonates import ATP-binding protein PhnC (Lactobacillus acidophilus (strain ATCC 700396 / NCK56 / N2 / NCFM)).